A 104-amino-acid polypeptide reads, in one-letter code: Phosphoribosyl-ATP pyrophosphatase (104 aa).

It belongs to the PRA-PH family.

It is found in the cytoplasm. The enzyme catalyses 1-(5-phospho-beta-D-ribosyl)-ATP + H2O = 1-(5-phospho-beta-D-ribosyl)-5'-AMP + diphosphate + H(+). It participates in amino-acid biosynthesis; L-histidine biosynthesis; L-histidine from 5-phospho-alpha-D-ribose 1-diphosphate: step 2/9. The polypeptide is Phosphoribosyl-ATP pyrophosphatase (Rhizobium rhizogenes (strain K84 / ATCC BAA-868) (Agrobacterium radiobacter)).